Here is a 438-residue protein sequence, read N- to C-terminus: Transcriptional regulator Mb0495 (438 aa).

Positions 1 to 12 are enriched in polar residues; it reads MYSTNRTSQSLS. The interval 1–22 is disordered; that stretch reads MYSTNRTSQSLSRKPGRKHQLR. A DNA-binding region (H-T-H motif) is located at residues 52–73; the sequence is VGRDVIAGSTSLSIATVNRQVI.

Belongs to the ROK (NagC/XylR) family.

In terms of biological role, positively regulates the expression of PE13 and PPE18. The protein is Transcriptional regulator Mb0495 of Mycobacterium bovis (strain ATCC BAA-935 / AF2122/97).